A 487-amino-acid chain; its full sequence is 3-octaprenyl-4-hydroxybenzoate carboxy-lyase (487 aa).

Asn172 is a Mn(2+) binding site. Prenylated FMN is bound by residues 175-177 (IYR), 189-191 (RWL), and 194-195 (RG). Glu238 contributes to the Mn(2+) binding site. Asp287 acts as the Proton donor in catalysis.

The protein belongs to the UbiD family. As to quaternary structure, homohexamer. Prenylated FMN serves as cofactor. The cofactor is Mn(2+).

The protein localises to the cell membrane. It catalyses the reaction a 4-hydroxy-3-(all-trans-polyprenyl)benzoate + H(+) = a 2-(all-trans-polyprenyl)phenol + CO2. The protein operates within cofactor biosynthesis; ubiquinone biosynthesis. In terms of biological role, catalyzes the decarboxylation of 3-octaprenyl-4-hydroxy benzoate to 2-octaprenylphenol, an intermediate step in ubiquinone biosynthesis. The chain is 3-octaprenyl-4-hydroxybenzoate carboxy-lyase from Thiobacillus denitrificans (strain ATCC 25259 / T1).